Reading from the N-terminus, the 109-residue chain is uncharacterized protein (109 aa).

The N-terminal stretch at 1–28 is a signal peptide; the sequence is MNMLAYFLYCRQLLLAVVLIEFPPRLCG.

This is an uncharacterized protein from Homo sapiens (Human).